A 1483-amino-acid chain; its full sequence is Chromosome partition protein MukB (1483 aa).

34–41 (GGNGAGKS) lines the ATP pocket. Coiled coils occupy residues 311 to 426 (EMAR…LQRA) and 547 to 607 (GQQV…WLAA). The tract at residues 666-783 (PGGSEDARLN…KVPLFGRAAR (118 aa)) is flexible hinge. 2 coiled-coil regions span residues 835 to 1115 (EAAL…SAKA) and 1206 to 1266 (DDPV…QAVS). The interval 850 to 870 (RELNNHESENQQQRQQYEQAK) is disordered.

It belongs to the SMC family. MukB subfamily. In terms of assembly, homodimerization via its hinge domain. Binds to DNA via its C-terminal region. Interacts, and probably forms a ternary complex, with MukE and MukF via its C-terminal region. The complex formation is stimulated by calcium or magnesium. Interacts with tubulin-related protein FtsZ.

Its subcellular location is the cytoplasm. The protein resides in the nucleoid. Plays a central role in chromosome condensation, segregation and cell cycle progression. Functions as a homodimer, which is essential for chromosome partition. Involved in negative DNA supercoiling in vivo, and by this means organize and compact chromosomes. May achieve or facilitate chromosome segregation by condensation DNA from both sides of a centrally located replisome during cell division. In Erwinia tasmaniensis (strain DSM 17950 / CFBP 7177 / CIP 109463 / NCPPB 4357 / Et1/99), this protein is Chromosome partition protein MukB.